The chain runs to 206 residues: Small ribosomal subunit protein uS4 (206 aa).

In terms of domain architecture, S4 RNA-binding spans 96 to 156 (GRLDNVVYRM…EKAKNQLRVK (61 aa)).

Belongs to the universal ribosomal protein uS4 family. As to quaternary structure, part of the 30S ribosomal subunit. Contacts protein S5. The interaction surface between S4 and S5 is involved in control of translational fidelity.

In terms of biological role, one of the primary rRNA binding proteins, it binds directly to 16S rRNA where it nucleates assembly of the body of the 30S subunit. With S5 and S12 plays an important role in translational accuracy. The sequence is that of Small ribosomal subunit protein uS4 from Marinobacter nauticus (strain ATCC 700491 / DSM 11845 / VT8) (Marinobacter aquaeolei).